The chain runs to 862 residues: Cone cGMP-specific 3',5'-cyclic phosphodiesterase subunit alpha' (862 aa).

GAF domains lie at S75–L224 and D256–V433. Residues S97, N116, D169–T172, and T176 each bind 3',5'-cyclic GMP. A PDEase domain is found at D486–Y819. H562 functions as the Proton donor in the catalytic mechanism. H566, H602, D603, and D723 together coordinate a divalent metal cation. Residues K830–E842 are compositionally biased toward basic and acidic residues. The interval K830–L862 is disordered. A Cysteine methyl ester modification is found at C859. The S-geranylgeranyl cysteine moiety is linked to residue C859. Residues I860–L862 constitute a propeptide, removed in mature form.

It belongs to the cyclic nucleotide phosphodiesterase family. Composed of two alpha' subunits that are associated with 3 smaller proteins of 11, 13, and 15 kDa. The cofactor is a divalent metal cation.

It is found in the cell membrane. The catalysed reaction is 3',5'-cyclic GMP + H2O = GMP + H(+). Its function is as follows. As cone-specific cGMP phosphodiesterase, it plays an essential role in light detection and cone phototransduction by rapidly decreasing intracellular levels of cGMP. The protein is Cone cGMP-specific 3',5'-cyclic phosphodiesterase subunit alpha' (PDE6C) of Gallus gallus (Chicken).